We begin with the raw amino-acid sequence, 356 residues long: Tyrosine recombinase XerS (356 aa).

Residues 16-121 (LMPWYVLEYY…ALSSLYKYLT (106 aa)) form the Core-binding (CB) domain. In terms of domain architecture, Tyr recombinase spans 169–354 (GFLTYIDQEH…VNDEQKNALD (186 aa)). Residues Arg210, Lys234, His306, Arg309, and His332 contribute to the active site. Tyr341 (O-(3'-phospho-DNA)-tyrosine intermediate) is an active-site residue.

Belongs to the 'phage' integrase family. XerS subfamily.

The protein localises to the cytoplasm. FtsK is required for recombination. Site-specific tyrosine recombinase, which acts by catalyzing the cutting and rejoining of the recombining DNA molecules. Essential to convert dimers of the bacterial chromosome into monomers to permit their segregation at cell division. This is Tyrosine recombinase XerS from Streptococcus pneumoniae (strain P1031).